The chain runs to 35 residues: Phosphoribulokinase (35 aa).

This sequence belongs to the phosphoribulokinase family.

It is found in the plastid. The protein resides in the chloroplast. It catalyses the reaction D-ribulose 5-phosphate + ATP = D-ribulose 1,5-bisphosphate + ADP + H(+). Its pathway is carbohydrate biosynthesis; Calvin cycle. Its activity is regulated as follows. Light regulated via thioredoxin by reversible oxidation/reduction of sulfhydryl/disulfide groups. This Pinus pinaster (Maritime pine) protein is Phosphoribulokinase.